Consider the following 757-residue polypeptide: Protein ALTERED SEED GERMINATION 2 (757 aa).

WD repeat units lie at residues 6–43 (FHDGNIFNLLHTRSQDPSHEVDQRMQFHSSLVRRLSQE), 48–87 (GHQGCVNALAWNSNGSLLISGSDDLRINIWNYSSRKLLHS), 91–132 (GHTA…GRAE), 145–185 (CHTR…SCPP), 213–253 (KQTL…PLAS), and 277–316 (RTNLHLTHVTFSPNGEEVLLSYSGEHVYLMNVNNGICSTG). Positions 245–257 (RRMLPPLASSRKR) match the Nuclear localization signal motif. Residues 442–475 (FKAHYYMSEALQQLGKCKEALDFATAAQHMNPSD) form a TPR repeat. The disordered stretch occupies residues 519 to 601 (ANSDSSHDMS…SSSQNDRTSY (83 aa)). The span at 523 to 532 (SSHDMSRSER) shows a compositional bias: basic and acidic residues. Positions 533 to 543 (EDSDYDEELEL) are enriched in acidic residues. Positions 582–601 (TVDNASSGTASSSQNDRTSY) are enriched in polar residues. WD repeat units lie at residues 618–658 (NVGT…LMKV) and 661–700 (GDESVLNCIQCHPFDSVVATSGIDNTIKIWSPTASVPSIV). A lipid anchor (S-12-hydroxyfarnesyl cysteine; by FTB/ERA1) is attached at cysteine 754.

As to quaternary structure, interacts with DDB1; the subcellular localization of this complex depends on farnesylation status. Binds to HDA9 in the cytosol when farnesylated. In terms of processing, farnesylated at Cys-754 by FTB/ERA1; this modification triggers an exclusion from the nucleus.

The protein localises to the nucleus. It is found in the cytoplasm. Its subcellular location is the cytosol. It participates in protein modification; protein ubiquitination. Its function is as follows. May function as a substrate adapter for CUL4-DDB1 E3 ubiquitin-protein ligase complex. Negative regulator of fatty acid biosynthetic process and accumulation. Acts as an abscisic acid (ABA) negative regulator. Involved in responses to salt (NaCl) and osmotic (e.g. in response to mannitol and PEG) stresses. This is Protein ALTERED SEED GERMINATION 2 from Arabidopsis thaliana (Mouse-ear cress).